Consider the following 203-residue polypeptide: Glycerol-3-phosphate acyltransferase (203 aa).

4 helical membrane-spanning segments follow: residues 6 to 26 (LTLLMIVAAYLAGSVSSAVLV), 82 to 102 (AISLGLIAIAACLGHIYPIFF), 118 to 138 (APIGDDLAICLMASWVVLVLI), and 141 to 161 (YSSLAAIITALLAPLYTWWLD).

Belongs to the PlsY family. In terms of assembly, probably interacts with PlsX.

It is found in the cell inner membrane. It catalyses the reaction an acyl phosphate + sn-glycerol 3-phosphate = a 1-acyl-sn-glycero-3-phosphate + phosphate. It functions in the pathway lipid metabolism; phospholipid metabolism. Its function is as follows. Catalyzes the transfer of an acyl group from acyl-phosphate (acyl-PO(4)) to glycerol-3-phosphate (G3P) to form lysophosphatidic acid (LPA). This enzyme utilizes acyl-phosphate as fatty acyl donor, but not acyl-CoA or acyl-ACP. The polypeptide is Glycerol-3-phosphate acyltransferase (Shewanella sp. (strain ANA-3)).